A 132-amino-acid chain; its full sequence is Small ribosomal subunit protein uS8 (132 aa).

It belongs to the universal ribosomal protein uS8 family. Part of the 30S ribosomal subunit. Contacts proteins S5 and S12.

In terms of biological role, one of the primary rRNA binding proteins, it binds directly to 16S rRNA central domain where it helps coordinate assembly of the platform of the 30S subunit. The polypeptide is Small ribosomal subunit protein uS8 (Rhizobium etli (strain CIAT 652)).